The chain runs to 105 residues: Integration host factor (105 aa).

The H2TH motif, binds DNA motif lies at 64-71 (LPKVGKVK). The lid, binds DNA stretch occupies residues 82–94 (APTRRLRGLGDRQ).

This sequence belongs to the actinobacterial IHF (aIHF) family. Homodimer in solution. Binds DNA as a monomer.

It is found in the cytoplasm. Functionally, a nucleoid-associated protein (NAP) required for septum formation and normal cell division as well as for DNA segregation. Binds about 135 sites across the chromosome, most of which are genes involved in virulence; most DNA-binding sites are immediately upstream of transcription start sites. When mIHF is depleted most of the genes are down-regulated. Binds supercoiled and linear dsDNA in a concentration-dependent manner, probably non-sequence specifically. Binding compacts DNA, protecting it from degradation. Initial binding to supercoiled DNA opens it fully, followed by bending and compaction. Bends and thus compacts linear DNA. Binds DNA via 2 sites, forms left-handed loops on linear DNA; at low concentrations unwinds larger cosmids (42.6 kb) then collapses and condenses DNA as protein levels rise. Forms mostly left-handed loops on condensing cosmid DNA. The sequence is that of Integration host factor from Mycobacterium tuberculosis (strain ATCC 25618 / H37Rv).